The primary structure comprises 688 residues: Glycine--tRNA ligase beta subunit (688 aa).

The protein belongs to the class-II aminoacyl-tRNA synthetase family. In terms of assembly, tetramer of two alpha and two beta subunits.

The protein resides in the cytoplasm. It catalyses the reaction tRNA(Gly) + glycine + ATP = glycyl-tRNA(Gly) + AMP + diphosphate. This chain is Glycine--tRNA ligase beta subunit, found in Haemophilus influenzae (strain PittGG).